Reading from the N-terminus, the 55-residue chain is MKKLTDKQKSRLWELQRNRNFQASRRLEGVEMPLVTLTAAEALARLEELRSHYER.

This is an uncharacterized protein from Escherichia coli (strain K12).